Here is a 455-residue protein sequence, read N- to C-terminus: Golgi pH regulator (455 aa).

2 consecutive transmembrane segments (helical) span residues 5–25 (ADSV…WLFF) and 46–66 (VTFA…LGLL). N-linked (GlcNAc...) asparagine glycosylation occurs at asparagine 67. 3 helical membrane passes run 79–99 (LCVI…YFVV), 111–131 (LFSC…GDPF), and 150–170 (VGVI…VNCP). Asparagine 180 is a glycosylation site (N-linked (GlcNAc...) asparagine). The next 4 helical transmembrane spans lie at 290–310 (GYFF…NIVF), 343–363 (ISFI…LITL), 378–398 (VIVL…VLLI), and 425–445 (WFDV…YLAH).

It belongs to the Golgi pH regulator (TC 1.A.38) family. Homotrimer.

It localises to the golgi apparatus membrane. The enzyme catalyses iodide(out) = iodide(in). It carries out the reaction chloride(in) = chloride(out). The catalysed reaction is bromide(in) = bromide(out). It catalyses the reaction fluoride(in) = fluoride(out). Voltage-gated channel that enables the transfer of anions such as iodide, chloride, bromide and fluoride which may function in counter-ion conductance and participates in Golgi acidification. The sequence is that of Golgi pH regulator (gpr89-b) from Xenopus laevis (African clawed frog).